A 190-amino-acid chain; its full sequence is Xanthine phosphoribosyltransferase (190 aa).

Positions 20 and 27 each coordinate xanthine. Residue 128–132 (ANGQA) coordinates 5-phospho-alpha-D-ribose 1-diphosphate. Position 156 (Lys-156) interacts with xanthine.

It belongs to the purine/pyrimidine phosphoribosyltransferase family. Xpt subfamily. Homodimer.

Its subcellular location is the cytoplasm. The enzyme catalyses XMP + diphosphate = xanthine + 5-phospho-alpha-D-ribose 1-diphosphate. It participates in purine metabolism; XMP biosynthesis via salvage pathway; XMP from xanthine: step 1/1. Its function is as follows. Converts the preformed base xanthine, a product of nucleic acid breakdown, to xanthosine 5'-monophosphate (XMP), so it can be reused for RNA or DNA synthesis. This Pediococcus pentosaceus (strain ATCC 25745 / CCUG 21536 / LMG 10740 / 183-1w) protein is Xanthine phosphoribosyltransferase.